A 204-amino-acid chain; its full sequence is Redox-sensing transcriptional repressor Rex 2 (204 aa).

Residues 17–53 (MYRKVLEATKKPYISSDEIARFLEINPDLVRKDFSYL) constitute a DNA-binding region (H-T-H motif).

Belongs to the transcriptional regulatory Rex family. In terms of assembly, homodimer.

It is found in the cytoplasm. In terms of biological role, modulates transcription in response to changes in cellular NADH/NAD(+) redox state. The protein is Redox-sensing transcriptional repressor Rex 2 (rex2) of Thermotoga maritima (strain ATCC 43589 / DSM 3109 / JCM 10099 / NBRC 100826 / MSB8).